A 643-amino-acid polypeptide reads, in one-letter code: 1-deoxy-D-xylulose-5-phosphate synthase (643 aa).

Thiamine diphosphate is bound by residues histidine 78 and 119–121 (AHS). Aspartate 150 serves as a coordination point for Mg(2+). Thiamine diphosphate is bound by residues 151-152 (GS), asparagine 179, tyrosine 288, and glutamate 370. Position 179 (asparagine 179) interacts with Mg(2+).

The protein belongs to the transketolase family. DXPS subfamily. Homodimer. It depends on Mg(2+) as a cofactor. The cofactor is thiamine diphosphate.

It carries out the reaction D-glyceraldehyde 3-phosphate + pyruvate + H(+) = 1-deoxy-D-xylulose 5-phosphate + CO2. The protein operates within metabolic intermediate biosynthesis; 1-deoxy-D-xylulose 5-phosphate biosynthesis; 1-deoxy-D-xylulose 5-phosphate from D-glyceraldehyde 3-phosphate and pyruvate: step 1/1. Its function is as follows. Catalyzes the acyloin condensation reaction between C atoms 2 and 3 of pyruvate and glyceraldehyde 3-phosphate to yield 1-deoxy-D-xylulose-5-phosphate (DXP). The protein is 1-deoxy-D-xylulose-5-phosphate synthase of Brucella ovis (strain ATCC 25840 / 63/290 / NCTC 10512).